A 236-amino-acid polypeptide reads, in one-letter code: Adenosine 5'-phosphosulfate reductase (236 aa).

[4Fe-4S] cluster is bound by residues C122, C123, C205, and C208. C231 functions as the Nucleophile; cysteine thiosulfonate intermediate in the catalytic mechanism.

This sequence belongs to the PAPS reductase family. CysH subfamily. The cofactor is [4Fe-4S] cluster.

It is found in the cytoplasm. The catalysed reaction is [thioredoxin]-disulfide + sulfite + AMP + 2 H(+) = adenosine 5'-phosphosulfate + [thioredoxin]-dithiol. It participates in sulfur metabolism; hydrogen sulfide biosynthesis; sulfite from sulfate. In terms of biological role, catalyzes the formation of sulfite from adenosine 5'-phosphosulfate (APS) using thioredoxin as an electron donor. The sequence is that of Adenosine 5'-phosphosulfate reductase from Mycolicibacterium smegmatis (strain ATCC 700084 / mc(2)155) (Mycobacterium smegmatis).